The sequence spans 223 residues: Peptidyl-tRNA hydrolase (223 aa).

Y16 contributes to the tRNA binding site. H21 acts as the Proton acceptor in catalysis. TRNA is bound by residues F67, N69, and N113.

This sequence belongs to the PTH family. Monomer.

It localises to the cytoplasm. The catalysed reaction is an N-acyl-L-alpha-aminoacyl-tRNA + H2O = an N-acyl-L-amino acid + a tRNA + H(+). Functionally, hydrolyzes ribosome-free peptidyl-tRNAs (with 1 or more amino acids incorporated), which drop off the ribosome during protein synthesis, or as a result of ribosome stalling. Its function is as follows. Catalyzes the release of premature peptidyl moieties from peptidyl-tRNA molecules trapped in stalled 50S ribosomal subunits, and thus maintains levels of free tRNAs and 50S ribosomes. The sequence is that of Peptidyl-tRNA hydrolase from Helicobacter hepaticus (strain ATCC 51449 / 3B1).